The following is a 139-amino-acid chain: Maximins 4/H3 type 4 (139 aa).

Positions 1–18 are cleaved as a signal peptide; sequence MNFKYIIAVSFLIASAYA. Residues 19–43 constitute a propeptide that is removed on maturation; sequence RSVQNDEQSLSQRDVLEEESLREIR. Asparagine amide is present on asparagine 70. Positions 74–118 are excised as a propeptide; the sequence is TAEEHEVMKRLEAVMRDLDSLDHPEEASERETRGFNQDEIAKEKR. Isoleucine 138 carries the isoleucine amide modification.

It belongs to the bombinin family. Expressed by the skin glands.

It is found in the secreted. Maximin-4 shows antibacterial activity against both Gram-positive and Gram-negative bacteria. It also shows antimicrobial activity against the fungus C.albicans, but not against A.flavus nor P.uticale. It has little hemolytic activity. It does not possess a significant cytotoxicity against tumor cell lines. It does not possess a significant anti-HIV activity. Its function is as follows. Maximin-H3 shows antibacterial activity against both Gram-positive and Gram-negative bacteria. It also shows antimicrobial activity against the fungus C.albicans. Shows strong hemolytic activity. The protein is Maximins 4/H3 type 4 of Bombina maxima (Giant fire-bellied toad).